The chain runs to 1037 residues: Receptor kinase-like protein Xa21 (1037 aa).

A signal peptide spans 1–24 (MARSPTSVMISSLLLLLLIGPASS). The Extracellular portion of the chain corresponds to 25-665 (DDAAAAAAAR…LLENRKHFPV (641 aa)). Residues Asn-66, Asn-101, and Asn-112 are each glycosylated (N-linked (GlcNAc...) asparagine). LRR repeat units lie at residues 89–112 (PHRVVKLLLRSSNLSGIISPSLGN), 113–137 (LSFLRELDLSDNYLSGEIPPELSRL), 138–161 (SRLQLLELSGNSIQGSIPAAIGAC), 163–185 (KLTSLDLSHNQLRGMIPREIGAS), 187–210 (KHLSNLYLHTNGLSGEIPSALGNL), 211–234 (TSLQYFDLSCNRLSGAIPSSLGQL), 236–259 (SSLLTMNLRQNNLSGMIPNSIWNL), 260–283 (SSLRAFSVSENKLGGMIPTNAFKT), 285–308 (HLLEVIDMGTNRFYGKIPASVANA), 310–331 (HLTQLQIDGNLFSGIITSGFGR), and 333–355 (RNLTTLYLWRNLFQTREQEDWGF). N-linked (GlcNAc...) asparagine glycosylation occurs at Asn-209. Residues Asn-247 and Asn-258 are each glycosylated (N-linked (GlcNAc...) asparagine). A glycan (N-linked (GlcNAc...) asparagine) is linked at Asn-307. Residues Asn-334, Asn-361, and Asn-385 are each glycosylated (N-linked (GlcNAc...) asparagine). LRR repeat units lie at residues 362–385 (CSKLQTLDLGENNLGGVLPNSFSN), 387–411 (STSLSFLALDLNKITGSIPKDIGNL), 412–435 (IGLQHLYLCNNNFRGSLPSSLGRL), 437–459 (NLGILVAYENNLSGSIPLAIGNL), 460–482 (TELNILLLGTNKFSGWIPYTLSN), 483–507 (LTNLLSLGLSTNNLSGPIPSELFNI), 509–532 (TLSIMINVSKNNLEGSIPQEIGHL), 533–556 (KNLVEFHAESNRLSGKIPNTLGDC), 557–580 (QLLRYLYLQNNLLSGSIPSALGQL), 581–604 (KGLETLDLSSNNLSGQIPTSLADI), and 606–629 (MLHSLNLSFNSFMGEVPTIGAFAD). N-linked (GlcNAc...) asparagine glycans are attached at residues Asn-447, Asn-458, Asn-482, Asn-495, and Asn-515. 2 N-linked (GlcNAc...) asparagine glycosylation sites follow: Asn-592 and Asn-611. Residues 666–686 (LPISVSLVAALAILSSLYLLI) traverse the membrane as a helical segment. At 687–1037 (TWHKRTKKGA…PVCEGASLEF (351 aa)) the chain is on the cytoplasmic side. A Nuclear localization signal motif is present at residues 689 to 694 (HKRTKK). Ser-698 is modified (phosphoserine). Thr-700 carries the phosphothreonine modification. Ser-701 carries the post-translational modification Phosphoserine. Position 717 is a phosphothreonine (Thr-717). One can recognise a Protein kinase domain in the interval 720–1019 (FAPTNLLGSG…GDIIDELNAI (300 aa)). ATP contacts are provided by residues 726–734 (LGSGSFGSV) and Lys-748. The active-site Proton acceptor is the Asp-854.

Belongs to the protein kinase superfamily. Ser/Thr protein kinase family. In terms of assembly, interacts with WRKY62/XB10 in the nucleus. Interacts with SERK2. It depends on Mn(2+) as a cofactor. Mg(2+) is required as a cofactor. Post-translationally, undergoes protein cleavage upon X.oryzae pv. oryzae protein Ax21 detection, thus releasing the processed protein kinase Xa21 chain. Autophosphorylated on serine and threonine residues; these phosphorylation prevents proteolytic degradation.

It localises to the cell membrane. Its subcellular location is the endoplasmic reticulum membrane. The protein localises to the nucleus. The enzyme catalyses L-seryl-[protein] + ATP = O-phospho-L-seryl-[protein] + ADP + H(+). The catalysed reaction is L-threonyl-[protein] + ATP = O-phospho-L-threonyl-[protein] + ADP + H(+). Its function is as follows. Receptor kinase that detects X.oryzae pv. oryzae protein Ax21 to promote innate immunity. Following X.oryzae pv. oryzae protein Ax21 detection, undergoes cleavage, releasing the processed protein kinase Xa21 chain. Functionally, the processed protein kinase Xa21 chain released by protein cleavage after X.oryzae pv. oryzae protein Ax21 detection translocates into the nucleus where it can bind and regulate WRKY62, a transcription factor. Confers resistance to the bacterial pathogen X.oryzae pv. oryzae (Xoo). The protein is Receptor kinase-like protein Xa21 of Oryza sativa subsp. japonica (Rice).